A 119-amino-acid chain; its full sequence is HTH-type transcriptional regulator SarX (119 aa).

The H-T-H motif DNA-binding region spans 55-78 (LKTAMDELDLSRTKLLVSIRRLIE).

The protein belongs to the SarA family.

The protein resides in the cytoplasm. Functionally, involved in the regulation of virulence genes. Acts as a repressor of the agr locus and consequently targets genes regulated by the agr system such as sspA, hla and hlb. Binds directly to the agr promoter region. This Staphylococcus aureus (strain USA300) protein is HTH-type transcriptional regulator SarX (sarX).